Here is a 102-residue protein sequence, read N- to C-terminus: Large ribosomal subunit protein bL21 (102 aa).

Belongs to the bacterial ribosomal protein bL21 family. In terms of assembly, part of the 50S ribosomal subunit. Contacts protein L20.

This protein binds to 23S rRNA in the presence of protein L20. The polypeptide is Large ribosomal subunit protein bL21 (Geobacillus thermodenitrificans (strain NG80-2)).